Here is a 597-residue protein sequence, read N- to C-terminus: 66 kDa protein (597 aa).

Disordered stretches follow at residues 62 to 82 (VRLQ…PSLQ), 160 to 198 (HSVP…FRQH), 218 to 315 (NQLA…SCRV), 329 to 411 (HFKS…LHHD), and 535 to 586 (SSPQ…ASAL). Residues 64-80 (LQSSPPRGPQSDRNLPS) show a composition bias toward polar residues. Residues 218-234 (NQLAQAQQHPLPSSKPL) show a composition bias toward polar residues. Residues 273 to 291 (PSSRGHLPSSTSSSSPRSN) show a composition bias toward low complexity. Residues 305-315 (SNSQDLRSCRV) show a composition bias toward polar residues. The span at 389 to 400 (QTHHARLPHSKR) shows a compositional bias: basic residues. Residues 535-574 (SSPQSHSSESLRGDSPPSSHLPSSPSSACSGDSFASCSSF) are compositionally biased toward low complexity. The span at 575-584 (GPSNPTSSAS) shows a compositional bias: polar residues.

Belongs to the tymoviridae protein p69 family.

In Ononis, this protein is 66 kDa protein.